The following is a 261-amino-acid chain: Lysosome-associated membrane glycoprotein 5 (261 aa).

An N-terminal signal peptide occupies residues 1-29; the sequence is MDLQGRAVPSVDRLRVLLMLFHTMAQIMA. Residues 30–234 lie on the Extracellular side of the membrane; that stretch reads EQEVENLSGL…AVDEREQLEE (205 aa). N-linked (GlcNAc...) asparagine glycans are attached at residues Asn35, Asn53, and Asn126. A helical transmembrane segment spans residues 235–255; that stretch reads TLPLILGLILGLVIVVTLAIY. At 256–261 the chain is on the cytoplasmic side; sequence HVHPQK.

Belongs to the LAMP family. In terms of processing, glycosylated.

The protein resides in the cytoplasmic vesicle membrane. It is found in the cell membrane. Its subcellular location is the cell projection. It localises to the dendrite. The protein localises to the cytoplasmic vesicle. The protein resides in the secretory vesicle. It is found in the synaptic vesicle membrane. Its subcellular location is the growth cone membrane. It localises to the early endosome membrane. The protein localises to the recycling endosome. The protein resides in the endoplasmic reticulum-Golgi intermediate compartment membrane. It is found in the endosome membrane. Its function is as follows. Plays a role in short-term synaptic plasticity in a subset of GABAergic neurons in the brain. The chain is Lysosome-associated membrane glycoprotein 5 (LAMP5) from Pongo abelii (Sumatran orangutan).